The sequence spans 252 residues: Type II secretion system protein N (252 aa).

The Cytoplasmic segment spans residues 1-4 (MKRA). Residues 5–25 (VGYGLLFSTVLMTSVVVHLPA) traverse the membrane as a helical segment. Residues 26-252 (QVALSPLPLP…RYPFNQQGQL (227 aa)) are Periplasmic-facing.

This sequence belongs to the GSP N family.

The protein resides in the cell inner membrane. Involved in a type II secretion system (T2SS, formerly general secretion pathway, GSP) for the export of proteins. Required for secretion of cholera toxin through the outer membrane. This Vibrio cholerae serotype O1 (strain ATCC 39315 / El Tor Inaba N16961) protein is Type II secretion system protein N (epsN).